The following is a 143-amino-acid chain: Hemoglobin subunit alpha-2 (143 aa).

Residue Ser-2 is modified to N-acetylserine. The Globin domain occupies 2-143 (SLSTKDKDTV…LARALSEKYR (142 aa)). 2 residues coordinate heme b: His-60 and His-89.

The protein belongs to the globin family. Hb 2 is a heterotetramer of two alpha-2 and two beta chains. Red blood cells.

Functionally, involved in oxygen transport from gills to the various peripheral tissues. The chain is Hemoglobin subunit alpha-2 from Cottoperca gobio (Frogmouth).